We begin with the raw amino-acid sequence, 304 residues long: UDP-3-O-acyl-N-acetylglucosamine deacetylase (304 aa).

The Zn(2+) site is built by His79, His238, and Asp242. The active-site Proton donor is His265.

It belongs to the LpxC family. Requires Zn(2+) as cofactor.

The enzyme catalyses a UDP-3-O-[(3R)-3-hydroxyacyl]-N-acetyl-alpha-D-glucosamine + H2O = a UDP-3-O-[(3R)-3-hydroxyacyl]-alpha-D-glucosamine + acetate. It participates in glycolipid biosynthesis; lipid IV(A) biosynthesis; lipid IV(A) from (3R)-3-hydroxytetradecanoyl-[acyl-carrier-protein] and UDP-N-acetyl-alpha-D-glucosamine: step 2/6. Its function is as follows. Catalyzes the hydrolysis of UDP-3-O-myristoyl-N-acetylglucosamine to form UDP-3-O-myristoylglucosamine and acetate, the committed step in lipid A biosynthesis. The chain is UDP-3-O-acyl-N-acetylglucosamine deacetylase from Pseudoalteromonas atlantica (strain T6c / ATCC BAA-1087).